The chain runs to 710 residues: Secretin OutD (710 aa).

Residues 1 to 27 (MLGKGIKKSWGWLGLTVLLLGSPCGWA) form the signal peptide. Residues 28 to 105 (AEFSASFKGT…DNGVLKVIRS (78 aa)) are N0. The interval 123 to 190 (IGDELVTRVV…DIVNTVDKTG (68 aa)) is N1. An N2 region spans residues 192-262 (REMVTVPLTY…VEMIRQLDRK (71 aa)). The interval 288–399 (GNGTSGNRNS…INQLDIRRPQ (112 aa)) is N3. A disordered region spans residues 289–353 (NGTSGNRNSS…AFGSTSSSGG (65 aa)). A secretin region spans residues 401–648 (LVEAIIAEIQ…MLFLRPTIIR (248 aa)). The s domain stretch occupies residues 691-710 (TYTFRQVQSSISDFYKPEGR).

The protein belongs to the bacterial secretin family. GSP D subfamily. Forms a cylindrical channel with 15 subunits. Interacts with pilotin OutS.

The protein localises to the cell outer membrane. Its function is as follows. Involved in a type II secretion system (T2SS, formerly general secretion pathway, GSP) for the export of proteins. Required for the translocation of the multiple pectic enzymes. This subunit forms the outer membrane channel. The protein is Secretin OutD (outD) of Dickeya dadantii (strain 3937) (Erwinia chrysanthemi (strain 3937)).